We begin with the raw amino-acid sequence, 183 residues long: MNSYSLLTRSFHESSKPLFNLASTLLKASKRTQLRNELIKQGPKRPTSAYFLYLQDHRSQFVKENPTLRPAEISKIAGEKWQNLEADIKEKYISERKKLYSEYQKAKKEFDEKLPPKKPAGPFIKYANEVRSQVFAQHPDKSQLDLMKIIGDKWQSLDQSIKDKYIQEYKKAIQEYNARYPLN.

A mitochondrion-targeting transit peptide spans 1–26 (MNSYSLLTRSFHESSKPLFNLASTLL). 2 consecutive DNA-binding regions (HMG box) follow at residues 43 to 111 (PKRP…KEFD) and 116 to 183 (PKKP…YPLN).

It is found in the mitochondrion. It localises to the nucleus. Functionally, specific binding to the autonomously replicating sequence 1 (ARS1). Interaction with regulatory regions: probably involved in compacting the mitochondrial genome. It might play a positive role in gene expression and replication. This is ARS-binding factor 2, mitochondrial (ABF2) from Saccharomyces cerevisiae (strain ATCC 204508 / S288c) (Baker's yeast).